A 294-amino-acid polypeptide reads, in one-letter code: Cyclin-G1 (294 aa).

This sequence belongs to the cyclin family. Cyclin G subfamily. Binds to B' regulatory B subunits of protein phosphatase A (PP2A) following induction by p53 (in vitro). In terms of tissue distribution, highest levels in kidney, heart and skeletal muscle.

Its subcellular location is the nucleus. In terms of biological role, may play a role in growth regulation. Is associated with G2/M phase arrest in response to DNA damage. May be an intermediate by which p53 mediates its role as an inhibitor of cellular proliferation. The sequence is that of Cyclin-G1 (Ccng1) from Mus musculus (Mouse).